Reading from the N-terminus, the 265-residue chain is Pancreas transcription factor 1 subunit alpha (265 aa).

Residues 115–167 form the bHLH domain; it reads QLRQAANVRERRRMQSINDAFEGLRSHIPTLPYEKRLSKVDTLRLAIGYINFL.

Its subcellular location is the nucleus. Its function is as follows. Transcription factor implicated in the cell fate determination in various organs. Binds to the E-box consensus sequence 5'-CANNTG-3'. Required for exocrine pancreatic development. Plays a central role in directing the differentiation of retinal progenitors towards horizontal and amacrine fates. The polypeptide is Pancreas transcription factor 1 subunit alpha (ptf1a) (Danio rerio (Zebrafish)).